The following is a 477-amino-acid chain: Acylamidase (477 aa).

Catalysis depends on charge relay system residues K82 and S157. The active-site Acyl-ester intermediate is S181.

It belongs to the amidase family.

The enzyme catalyses a monocarboxylic acid amide + H2O = a monocarboxylate + NH4(+). The catalysed reaction is an anilide + H2O = aniline + a carboxylate + H(+). It carries out the reaction an N-acyl-L-amino acid + H2O = an L-alpha-amino acid + a carboxylate. It catalyses the reaction an N-acetyl-L-cysteine-S-conjugate + H2O = an S-substituted L-cysteine + acetate. With respect to regulation, amidase activity is completely suppressed by inhibitors of serine proteases (phenylmethylsulfonyl fluoride and diisopropyl fluorophosphate), partially inhibited by copper and mercury ions, but is not affected by inhibitors of aliphatic amidases (acetaldehyde and nitrophenyl disulfides) or by EDTA. Its function is as follows. Amidase with broad substrate specificity, catalyzing the hydrolysis of a wide range of N-substituted amides, and, to a lesser extent, the hydrolysis of non-substituted amides. Acid para-nitroanilides (4'-nitroacetanilide, Gly-pNA, Ala-pNA, Leu-pNA) are the best substrates for this enzyme. N-substituted acrylamides (isopropyl acrylamide, N,N-dimethyl-aminopropyl acrylamide, and methylene-bis-acrylamide), N-acetyl derivatives of glycine, alanine and leucine, and aliphatic amides (acetamide, acrylamide, isobutyramide, n-butyramide, and valeramide) can also be used as substrates but with less efficiency. This Rhodococcus erythropolis (Arthrobacter picolinophilus) protein is Acylamidase.